Consider the following 138-residue polypeptide: MNIIDNFEQENISKLTANKKIPDFEAGDTVKVTVKIIDKAIEKDGKEKLTERFQAYEGVVIAKRNRGITSSFLVRKISHGEGVERRFMTYSPIVHSIDVVKYGVVRRAKLYYLRHRNGKAARIRERHITSAKPKAVKS.

Belongs to the bacterial ribosomal protein bL19 family.

Functionally, this protein is located at the 30S-50S ribosomal subunit interface and may play a role in the structure and function of the aminoacyl-tRNA binding site. The chain is Large ribosomal subunit protein bL19 from Rickettsia typhi (strain ATCC VR-144 / Wilmington).